The primary structure comprises 2303 residues: Adenomatous polyposis coli protein 2 (2303 aa).

The stretch at 8–59 (YEQLVRQVEALKAENSHLRQELRDNSSHLSKLETETSGMKEVLKHLQGKLEQ) forms a coiled coil. 2 disordered regions span residues 94-120 (PTLG…KDSF) and 247-270 (VPVD…QPGN). 6 ARM repeats span residues 302-341 (PESC…PGAK), 479-518 (ANKA…NLSW), 522-562 (INSK…NLSA), 566-609 (ENKA…NVSS), 615-654 (EDYR…NLSA), and 657-696 (ARDQ…NLLA). Disordered regions lie at residues 744–764 (KQGP…LRHL) and 816–835 (LART…DTSG). A compositionally biased stretch (basic and acidic residues) spans 825–834 (GGKEAEKDTS). Positions 840-864 (AAKAKAKLALAVARIDQLVEDISAL) form a coiled coil. Disordered regions lie at residues 867-908 (SSDD…AGSR), 953-986 (RRED…ATSA), 1069-1152 (RCSS…ENYV), and 1173-1228 (SPSI…EATQ). Low complexity predominate over residues 869–878 (DDSFSLSSGD). Residues 1058–1077 (LAAQEGPLSLSRCSSLSSLS) form repeat 1. Positions 1058 to 1587 (LAAQEGPLSL…SLSSSASSLS (530 aa)) are 5 X 20 AA approximate repeat of F-X-V-E-X-T-P-X-C-F-S-R-X-S-S-L-S-S-L-S. An interaction with CTNNB1 region spans residues 1058 to 1587 (LAAQEGPLSL…SLSSSASSLS (530 aa)). Over residues 1069–1084 (RCSSLSSLSSAGRPGP) the composition is skewed to low complexity. Positions 1088–1101 (GDLDDSDSSLEGLE) are enriched in acidic residues. A compositionally biased stretch (polar residues) spans 1143–1152 (TPSSSSENYV). Repeat 2 spans residues 1150-1169 (NYVQETPLVLSRCSSVSSLG). Low complexity predominate over residues 1173-1186 (SPSIASSIPSEPCS). The segment covering 1202-1212 (PGQTMPPSRSK) has biased composition (polar residues). The stretch at 1263–1282 (FTVEKPDENFSCASSLSALA) is repeat 3. 5 disordered regions span residues 1307-1335 (GAGG…PRGA), 1382-1497 (PAQE…QSLC), 1510-1684 (YGND…LDSV), 1724-2031 (LSVG…RGRP), and 2046-2232 (LRAA…DVDG). The span at 1390-1410 (TDSAEGTPVNFSSAASLSDET) shows a compositional bias: polar residues. Residues 1391-1410 (DSAEGTPVNFSSAASLSDET) form repeat 4. 2 stretches are compositionally biased toward basic and acidic residues: residues 1477–1489 (ADKD…RTRG) and 1537–1548 (FTRERPQGRKEA). The stretch at 1568–1587 (LIADETPPCYSLSSSASSLS) is repeat 5. Over residues 1578-1589 (SLSSSASSLSEP) the composition is skewed to low complexity. Phosphoserine occurs at positions 1585 and 1587. Residues 1638-1654 (PRRRPPVSGLRRRKPRA) are compositionally biased toward basic residues. Composition is skewed to basic and acidic residues over residues 1655–1671 (TRLD…RGEE) and 1739–1755 (RQAE…EKRG). Low complexity predominate over residues 1819-1830 (APPCLAQPAAPA). The segment at 1821–1900 (PCLAQPAAPA…PPVTQAAGAL (80 aa)) is required for localization to microtubules and function in microtubule stabilization. The span at 1851 to 1860 (ELATLSQPPR) shows a compositional bias: polar residues. Composition is skewed to low complexity over residues 1868–1886 (LAKT…SQPL), 1971–1984 (GLVR…SGSE), 2011–2026 (LSSA…GASP), 2049–2062 (APRQ…QRPP), and 2113–2123 (GAVPAAPASAD). Residues 2067–2144 (SPGERPARRT…PLPRVAAPGT (78 aa)) form an interaction with MAPRE1 and MAPRE3 region. The span at 2124 to 2135 (AARRSSDGEPRP) shows a compositional bias: basic and acidic residues. Over residues 2200 to 2209 (KTNSSTSPSL) the composition is skewed to polar residues.

This sequence belongs to the adenomatous polyposis coli (APC) family. In terms of assembly, interacts with PSRC1. Interacts with APC. Interacts with CTNNB1. Interacts with MAPRE1 and MAPRE3. Interacts with TP53BP. Interacts possibly with AXIN2. In terms of tissue distribution, widely expressed (at protein level). Specifically expressed in the CNS.

The protein resides in the cytoplasm. The protein localises to the cytoskeleton. It localises to the golgi apparatus. Its subcellular location is the perinuclear region. Its function is as follows. Stabilizes microtubules and may regulate actin fiber dynamics through the activation of Rho family GTPases. May also function in Wnt signaling by promoting the rapid degradation of CTNNB1. The protein is Adenomatous polyposis coli protein 2 of Homo sapiens (Human).